The primary structure comprises 185 residues: Ribosome-recycling factor (185 aa).

The protein belongs to the RRF family.

The protein resides in the cytoplasm. Its function is as follows. Responsible for the release of ribosomes from messenger RNA at the termination of protein biosynthesis. May increase the efficiency of translation by recycling ribosomes from one round of translation to another. This chain is Ribosome-recycling factor, found in Xylella fastidiosa (strain 9a5c).